Reading from the N-terminus, the 263-residue chain is Small ribosomal subunit protein eS4, Y isoform 1 (263 aa).

One can recognise an S4 RNA-binding domain in the interval 42–104; sequence LPLIIFLRNR…TGEHFRLVYD (63 aa).

This sequence belongs to the eukaryotic ribosomal protein eS4 family.

This is Small ribosomal subunit protein eS4, Y isoform 1 (RPS4Y1) from Monodelphis domestica (Gray short-tailed opossum).